The chain runs to 272 residues: Acidic leucine-rich nuclear phosphoprotein 32 family member B (272 aa).

LRR repeat units follow at residues 16-40 (PAAV…LTDE), 43-64 (NLEF…PKLP), 65-84 (KLKK…DRLA), and 89-110 (SLTH…EPLK). The LRRCT domain occupies 123 to 161 (CEVTNRSDYRETVFRLLPQLSYLDGYDREDQEAPDSDVE). Residues 149–254 (DREDQEAPDS…DEDEDEEEEE (106 aa)) are compositionally biased toward acidic residues. A disordered region spans residues 149–272 (DREDQEAPDS…RETDDEGEDD (124 aa)). Ser164 and Ser171 each carry phosphoserine. Residues 255-265 (SGKGEKRKRET) show a composition bias toward basic and acidic residues. Residues 260–263 (KRKR) carry the Nuclear localization signal motif. Thr265 is subject to Phosphothreonine.

It belongs to the ANP32 family. As to quaternary structure, interacts with histones H3 and H4. Interacts with KLF5; this interaction induces promoter region-specific histone incorporation and inhibition of histone acetylation by ANP32B. Some glutamate residues are glycylated by TTLL8. This modification occurs exclusively on glutamate residues and results in a glycine chain on the gamma-carboxyl group. In terms of processing, directly cleaved by caspase-3/CASP3. Predominantly expressed in brain. Expressed in the entire embryonic brain, whereas in the adult brain its expression is restricted to the subventricular zone where there are neural progenitor cells.

The protein localises to the nucleus. Functionally, multifunctional protein that is involved in the regulation of many processes including cell proliferation, apoptosis, cell cycle progression or transcription. Regulates the proliferation of neuronal stem cells, differentiation of leukemic cells and progression from G1 to S phase of the cell cycle. As negative regulator of caspase-3-dependent apoptosis, may act as an antagonist of ANP32A in regulating tissue homeostasis. Exhibits histone chaperone properties, able to recruit histones to certain promoters, thus regulating the transcription of specific genes. Also plays an essential role in the nucleocytoplasmic transport of specific mRNAs via the uncommon nuclear mRNA export receptor XPO1/CRM1. Participates in the regulation of adequate adaptive immune responses by acting on mRNA expression and cell proliferation. This Rattus norvegicus (Rat) protein is Acidic leucine-rich nuclear phosphoprotein 32 family member B (Anp32b).